Here is a 426-residue protein sequence, read N- to C-terminus: Serine hydroxymethyltransferase (426 aa).

(6S)-5,6,7,8-tetrahydrofolate contacts are provided by residues L118 and 122–124; that span reads GHL. The residue at position 227 (K227) is an N6-(pyridoxal phosphate)lysine.

The protein belongs to the SHMT family. Homodimer. Pyridoxal 5'-phosphate serves as cofactor.

It is found in the cytoplasm. The enzyme catalyses (6R)-5,10-methylene-5,6,7,8-tetrahydrofolate + glycine + H2O = (6S)-5,6,7,8-tetrahydrofolate + L-serine. It participates in one-carbon metabolism; tetrahydrofolate interconversion. The protein operates within amino-acid biosynthesis; glycine biosynthesis; glycine from L-serine: step 1/1. Catalyzes the reversible interconversion of serine and glycine with tetrahydrofolate (THF) serving as the one-carbon carrier. This reaction serves as the major source of one-carbon groups required for the biosynthesis of purines, thymidylate, methionine, and other important biomolecules. Also exhibits THF-independent aldolase activity toward beta-hydroxyamino acids, producing glycine and aldehydes, via a retro-aldol mechanism. In Mycolicibacterium paratuberculosis (strain ATCC BAA-968 / K-10) (Mycobacterium paratuberculosis), this protein is Serine hydroxymethyltransferase.